We begin with the raw amino-acid sequence, 196 residues long: uncharacterized protein (196 aa).

The tract at residues 1-21 (MQPEVEPLISPNLGAPGSHRE) is disordered.

This is an uncharacterized protein from Mus musculus (Mouse).